A 255-amino-acid chain; its full sequence is Taurine import ATP-binding protein TauB (255 aa).

Residues 2–229 (LNVSGLWAEY…RYAEGEPCRA (228 aa)) form the ABC transporter domain. 34-41 (GPSGCGKT) contacts ATP.

Belongs to the ABC transporter superfamily. Taurine importer (TC 3.A.1.17.1) family. The complex is composed of two ATP-binding proteins (TauB), two transmembrane proteins (TauC) and a solute-binding protein (TauA).

It is found in the cell inner membrane. It catalyses the reaction taurine(out) + ATP + H2O = taurine(in) + ADP + phosphate + H(+). Part of the ABC transporter complex TauABC involved in taurine import. Responsible for energy coupling to the transport system. The sequence is that of Taurine import ATP-binding protein TauB from Yersinia pestis bv. Antiqua (strain Antiqua).